The following is a 662-amino-acid chain: Hypoxia-inducible factor 3-alpha (662 aa).

Positions 1–25 are disordered; the sequence is MDWDQDRSNTELRKEKSRDAARSRR. The 54-residue stretch at 12-65 folds into the bHLH domain; sequence LRKEKSRDAARSRRSQETEVLYQLAHTLPFARGVSAHLDKASIMRLTISYLRMH. The segment at 75 to 98 is nuclear localization signal (isoform 2); sequence QVEKGGEPLDACYLKALEGFVMVL. 2 PAS domains span residues 80–150 and 225–295; these read GEPL…PNLS and PHPA…LSKG. Positions 228 to 272 are nuclear export signal (isoform 2); that stretch reads ASLEPPLGRGAFLSRHSLDMKFTYCDERIAEVAGYSPDDLIGCSA. Disordered regions lie at residues 352–377 and 416–446; these read EQTEQHTRRPPRLSASSQKGIPGNSV and PILDGPPPAATPSTPQATRRPQSPLPADLPD. The LRRLL signature appears at 414-418; sequence MAPIL. A compositionally biased stretch (low complexity) spans 426–437; the sequence is TPSTPQATRRPQ. The tract at residues 448–581 is ODD; it reads LTVGLENAHR…SEDKGLELLE (134 aa). Positions 450-501 are NTAD; the sequence is VGLENAHRLSTAQKNKTVETDLDIAQDPDTLDLEMLAPYISMDDDFQLNSSE. Residue K463 forms a Glycyl lysine isopeptide (Lys-Gly) (interchain with G-Cter in ubiquitin) linkage. An LAPYISMD motif is present at residues 485 to 492; it reads LAPYISMD. P487 bears the 4-hydroxyproline mark. A disordered region spans residues 500-595; sequence SEQLPKVHRR…KRSPRLEPGS (96 aa). The segment covering 505–521 has biased composition (basic residues); sequence KVHRRPPRVARRPRARS. Residue K565 forms a Glycyl lysine isopeptide (Lys-Gly) (interchain with G-Cter in ubiquitin) linkage. Residues 572–584 show a composition bias toward basic and acidic residues; sequence SEDKGLELLETKP.

Isoform 1 interacts with ARNT. Isoform 2 interacts with HIF1A. Isoform 2 interacts EPAS1. Isoform 2 interacts (via C-terminus domain) with BAD; the interaction reduces the binding between BAD and BAX. Isoform 2 (via C-terminus domain) interacts with BCL2L2 and MCL1. Interacts with VHL. Post-translationally, in normoxia, hydroxylated on Pro-487 in the oxygen-dependent degradation domain (ODD) by PHD. The hydroxylated proline promotes interaction with VHL, initiating rapid ubiquitination and subsequent proteasomal degradation. Ubiquitinated; ubiquitination occurs in a VHL- and oxygen-dependent pathway and subsequently targeted for proteasomal degradation. As to expression, isoform 3 is expressed in endothelial cells of vessels and capillaries in alveoli of the neonatal lung (at protein level). Expressed in lung, brain, heart and kidney. Isoform 2 is expressed in heart and lung. Isoform 2 is highly expressed in the epithelial cell layer of the cornea with lower expression in the layers of ganglion cells, inner nuclear cells, and rods and cones of the retina. Isoform 2 is expressed in the cerebellum only in the Purkinje cell layer.

It localises to the nucleus. It is found in the cytoplasm. The protein localises to the nucleus speckle. Its subcellular location is the mitochondrion. Its function is as follows. Acts as a transcriptional regulator in adaptive response to low oxygen tension. Acts as a regulator of hypoxia-inducible gene expression. Plays a role in the development of the cardiorespiratory system. Functionally, acts as a positive regulator of hypoxia-inducible gene expression. Associates to core DNA sequence 5'-TACGTG-3' within the hypoxia response element (HRE) of target gene promoters in a ARNT-dependent manner, and hence also participates in the transcriptional activation of reporter genes driven by HRE. Attenuates the ability of transcription factor HIF1A, EPAS1 and the HIF1A-ARNT complex to bind to hypoxia-responsive elements (HRE) located within the enhancer/promoter of hypoxia-inducible target genes and hence inhibits HRE-driven transcriptional activation. Functions as an inhibitor of angiogenesis in hypoxic cells of the cornea. May act as a tumor suppressor. May also be involved in apoptosis. In terms of biological role, attenuates the ability of transcription factor HIF1A, EPAS1 and the HIF1A-ARNT complex to bind to hypoxia-responsive elements (HRE) located within the enhancer/promoter of hypoxia-inducible target genes and hence inhibits HRE-driven transcriptional activation. Also plays a role in the development of the lung and heart during embryonic and neonatal stages. The protein is Hypoxia-inducible factor 3-alpha of Mus musculus (Mouse).